The primary structure comprises 743 residues: 1,4-alpha-glucan branching enzyme GlgB (743 aa).

Asp416 functions as the Nucleophile in the catalytic mechanism. Residue Glu469 is the Proton donor of the active site.

This sequence belongs to the glycosyl hydrolase 13 family. GlgB subfamily. Monomer.

It catalyses the reaction Transfers a segment of a (1-&gt;4)-alpha-D-glucan chain to a primary hydroxy group in a similar glucan chain.. It participates in glycan biosynthesis; glycogen biosynthesis. In terms of biological role, catalyzes the formation of the alpha-1,6-glucosidic linkages in glycogen by scission of a 1,4-alpha-linked oligosaccharide from growing alpha-1,4-glucan chains and the subsequent attachment of the oligosaccharide to the alpha-1,6 position. This Shewanella baltica (strain OS185) protein is 1,4-alpha-glucan branching enzyme GlgB.